Here is a 132-residue protein sequence, read N- to C-terminus: Small ribosomal subunit protein uS8c (132 aa).

This sequence belongs to the universal ribosomal protein uS8 family. Part of the 30S ribosomal subunit.

It localises to the plastid. It is found in the chloroplast. One of the primary rRNA binding proteins, it binds directly to 16S rRNA central domain where it helps coordinate assembly of the platform of the 30S subunit. The protein is Small ribosomal subunit protein uS8c (rps8) of Trieres chinensis (Marine centric diatom).